Reading from the N-terminus, the 267-residue chain is Probable membrane transporter protein MJ0441 (267 aa).

Helical transmembrane passes span 10–30 (LLLL…GSLF), 31–51 (GIGG…YFGI), 55–75 (VKFA…ISIF), 87–107 (ASIT…FLVV), 158–178 (FLSG…LAMA), 185–205 (AVAI…ISYL), and 213–233 (IYNI…PIIY).

The protein belongs to the 4-toluene sulfonate uptake permease (TSUP) (TC 2.A.102) family.

Its subcellular location is the cell membrane. The sequence is that of Probable membrane transporter protein MJ0441 from Methanocaldococcus jannaschii (strain ATCC 43067 / DSM 2661 / JAL-1 / JCM 10045 / NBRC 100440) (Methanococcus jannaschii).